The primary structure comprises 66 residues: Large ribosomal subunit protein bL35 (66 aa).

It belongs to the bacterial ribosomal protein bL35 family.

The protein is Large ribosomal subunit protein bL35 of Deinococcus deserti (strain DSM 17065 / CIP 109153 / LMG 22923 / VCD115).